A 590-amino-acid polypeptide reads, in one-letter code: Guanylate-binding protein 1 (590 aa).

Positions 1–309 (MASEIHMTGP…NAISSGDLPC (309 aa)) are GTPase domain (Globular). One can recognise a GB1/RHD3-type G domain in the interval 35 to 276 (TQPVVVVAIV…FCSYIFSNSK (242 aa)). GTP is bound by residues 45–52 (GLYRTGKS), 67–69 (LGS), and 97–101 (DTEGL). The residue at position 156 (Ser156) is a Phosphoserine. Residue Cys587 is modified to Cysteine methyl ester. Cys587 carries the S-farnesyl cysteine lipid modification. Residue Thr588 is modified to Phosphothreonine. Residues 588-590 (TIS) constitute a propeptide, removed in mature form.

It belongs to the TRAFAC class dynamin-like GTPase superfamily. GB1/RHD3 GTPase family. GB1 subfamily. In terms of assembly, homodimer; homodimerization occurs upon GTP-binding and is required for the second hydrolysis step from GDP to GMP. Undergoes conformational changes and oligomerization upon GTP-binding and hydrolysis. Heterodimer with other family members, including GBP2, GBP3, GBP4 and GBP5. Dimerization regulates subcellular location to membranous structures. Interacts with SQSTM1. Interacts (when phosphorylated) with 14-3-3 protein sigma (SFN); leading to GBP1 retention in the cytosol and inactivation. In terms of processing, isoprenylation is required for proper subcellular location. Post-translationally, phosphorylated at Ser-156 by PIM1 in absence of infection, inhibits GBP1: phosphorylation promotes interaction with 14-3-3 protein sigma (SFN), leading to GBP1 retention in the cytosol. Dephosphorylated in response to infection, liberating GBP1.

The protein localises to the cytoplasmic vesicle membrane. It localises to the golgi apparatus membrane. Its subcellular location is the cell membrane. The protein resides in the cytoplasm. It is found in the cytosol. The protein localises to the secreted. The enzyme catalyses GTP + H2O = GDP + phosphate + H(+). It catalyses the reaction GDP + H2O = GMP + phosphate + H(+). In terms of biological role, interferon (IFN)-inducible GTPase that plays important roles in innate immunity against a diverse range of bacterial, viral and protozoan pathogens. Hydrolyzes GTP to GMP in two consecutive cleavage reactions: GTP is first hydrolyzed to GDP and then to GMP in a processive manner. Following infection, recruited to the pathogen-containing vacuoles or vacuole-escaped bacteria and promotes both inflammasome assembly and autophagy. Acts as a positive regulator of inflammasome assembly by facilitating the detection of inflammasome ligands from pathogens. Involved in the lysis of pathogen-containing vacuoles, releasing pathogens into the cytosol. Following pathogen release in the cytosol, forms a protein coat in a GTPase-dependent manner that encapsulates pathogens and promotes the detection of ligands by pattern recognition receptors. Plays a key role in inflammasome assembly in response to infection by Gram-negative bacteria: following pathogen release in the cytosol, forms a protein coat that encapsulates Gram-negative bacteria and directly binds to lipopolysaccharide (LPS), disrupting the O-antigen barrier and unmasking lipid A that is that detected by the non-canonical inflammasome effector CASP4/CASP11. Also promotes recruitment of proteins that mediate bacterial cytolysis, leading to release double-stranded DNA (dsDNA) that activates the AIM2 inflammasome. Involved in autophagy by regulating bacteriolytic peptide generation via its interaction with ubiquitin-binding protein SQSTM1, which delivers monoubiquitinated proteins to autolysosomes for the generation of bacteriolytic peptides. Confers protection to several pathogens, including the bacterial pathogens L.monocytogenes and M.bovis BCG as well as the protozoan pathogen T.gondii. Exhibits antiviral activity against influenza virus. The polypeptide is Guanylate-binding protein 1 (GBP1) (Chlorocebus aethiops (Green monkey)).